A 32-amino-acid polypeptide reads, in one-letter code: Delta-conotoxin-like CnVIC (32 aa).

Cystine bridges form between C3/C18, C10/C22, and C17/C27. A 4-hydroxyproline mark is found at P6 and P14.

Belongs to the conotoxin O1 superfamily. As to expression, expressed by the venom duct.

It is found in the secreted. Functionally, delta-conotoxins bind to site 6 of voltage-gated sodium channels (Nav) and inhibit the inactivation process. This toxin acts on Nav1.2/SCN2A, Nav1.4/SCN4A, Nav1.5/SCN5A (weak activity), Nav1.6/SCN8A (EC(50)=2.5 uM). The chain is Delta-conotoxin-like CnVIC from Conus consors (Singed cone).